A 179-amino-acid polypeptide reads, in one-letter code: Stathmin-2 (179 aa).

A membrane attachment region spans residues 1 to 26 (MAKTAMAYKEKMKELSMLSLICSCFY). 6 positions are modified to phosphoserine: S16, S50, S62, S73, S80, and S97. Residues 38 to 179 (DDMEVKQINK…NKELQVELSG (142 aa)) enclose the SLD domain. The interval 39 to 96 (DMEVKQINKRASGQAFELILKPPSPVSEAPRTLASPKKKELSLEEIQKKLEAAEERRK) is regulatory/phosphorylation domain. Residues 74 to 179 (PKKKELSLEE…NKELQVELSG (106 aa)) adopt a coiled-coil conformation.

It belongs to the stathmin family. Expression is neuron-specific and found in cerebellum, forebrain, midbrain, tectum and spinal cord.

Its subcellular location is the cytoplasm. It localises to the perinuclear region. The protein localises to the cell projection. The protein resides in the growth cone. It is found in the membrane. Its subcellular location is the axon. It localises to the lamellipodium. In terms of biological role, is a key regulator of neurite extension through regulation of microtubule instabilily. In Gallus gallus (Chicken), this protein is Stathmin-2 (STMN2).